The following is a 229-amino-acid chain: ATP synthase subunit a (229 aa).

Transmembrane regions (helical) follow at residues 16–36, 81–101, 110–130, 142–162, 175–195, and 196–216; these read YAHVATLGIATVAAVGIGAAA, YIPFFASVFFFILFNNLLGMI, NMNTTFGFGVLMFLFYNFQGV, FMGPVIFLAPLMFVIEIVSHI, VMMGDHTVLSVFLDLVPIGVP, and IPFYVMGLFVCFVQAFVFTLL.

The protein belongs to the ATPase A chain family. F-type ATPases have 2 components, CF(1) - the catalytic core - and CF(0) - the membrane proton channel. CF(1) has five subunits: alpha(3), beta(3), gamma(1), delta(1), epsilon(1). CF(0) has three main subunits: a(1), b(2) and c(9-12). The alpha and beta chains form an alternating ring which encloses part of the gamma chain. CF(1) is attached to CF(0) by a central stalk formed by the gamma and epsilon chains, while a peripheral stalk is formed by the delta and b chains.

The protein resides in the cell inner membrane. Its function is as follows. Key component of the proton channel; it plays a direct role in the translocation of protons across the membrane. The chain is ATP synthase subunit a from Bdellovibrio bacteriovorus (strain ATCC 15356 / DSM 50701 / NCIMB 9529 / HD100).